Here is a 116-residue protein sequence, read N- to C-terminus: Protein Wnt-5a (116 aa).

Serine 1 carries O-palmitoleoyl serine; by PORCN lipidation. Asparagine 69 and asparagine 83 each carry an N-linked (GlcNAc...) asparagine glycan. Cysteines 82 and 97 form a disulfide.

It belongs to the Wnt family. Palmitoleoylation is required for efficient binding to frizzled receptors. Depalmitoleoylation leads to Wnt signaling pathway inhibition.

Its subcellular location is the secreted. It is found in the extracellular space. It localises to the extracellular matrix. Functionally, ligand for members of the frizzled family of seven transmembrane receptors. Can activate or inhibit canonical Wnt signaling, depending on receptor context. Required during embryogenesis for extension of the primary anterior-posterior axis. This is Protein Wnt-5a (WNT-5A) from Alopias vulpinus (Common thresher shark).